Here is a 236-residue protein sequence, read N- to C-terminus: Small ribosomal subunit protein uS2c (236 aa).

It belongs to the universal ribosomal protein uS2 family.

It is found in the plastid. The protein localises to the chloroplast. The polypeptide is Small ribosomal subunit protein uS2c (rps2) (Saccharum hybrid (Sugarcane)).